A 299-amino-acid polypeptide reads, in one-letter code: Anti-sigma-D factor RsdA (299 aa).

Residues 86-106 traverse the membrane as a helical segment; the sequence is LAAVGSVAAALLVLSGFGAVV. The interval 187–299 is disordered; it reads NTKVETRDPN…APETPVSPTH (113 aa). Composition is skewed to low complexity over residues 201-212 and 250-271; these read PGSPSNPAAPGS and PNST…EPGS.

In terms of assembly, interacts with ECF RNA polymerase sigma factor SigD; this should inhibit the interaction of SigD with the RNA polymerase catalytic core. The cytosolic fragment is degraded by a ClpP1-ClpP2-ClpX complex, as would be expected after S1P and S2P intramembrane proteolysis. This releases SigD so that it may bind to the RNA polymerase catalytic core.

It is found in the cell membrane. In terms of biological role, an anti-sigma factor for extracytoplasmic function (ECF) sigma factor SigD. ECF sigma factors are held in an inactive form by an anti-sigma factor until released by regulated intramembrane proteolysis (RIP). RIP occurs when an extracytoplasmic signal triggers a concerted proteolytic cascade to transmit information and elicit cellular responses. The membrane-spanning regulatory substrate protein is first cut extracytoplasmically (site-1 protease, S1P), then within the membrane itself (site-2 protease, S2P), while cytoplasmic proteases finish degrading the regulatory protein, liberating the sigma factor. Neither S1P nor S2P proteases have been so far identified for this anti-sigma factor. This chain is Anti-sigma-D factor RsdA (rsda), found in Mycobacterium bovis (strain ATCC BAA-935 / AF2122/97).